We begin with the raw amino-acid sequence, 222 residues long: MRQEATCSLVLTQDAQHRKNQPPLAEEDDDRDHTDDAMPPPCSILLRQEEGEATAAAAGEGLLVPPLNFAMVDHGVYRSGFPDISNLPFVESLRLRSVLCLCPEPYPEANQEFLRAHGIRLFQFGIDGSKEPFVNIPEDRIREALKVVLDVANHPVLIHCKRGKHRTGCVVGCLRKLQRWCLTSIFDEYQRFAAAKARVSDLRFMELFDISSLKHLPASFSC.

Residues 1 to 14 (MRQEATCSLVLTQD) show a composition bias toward polar residues. Positions 1 to 41 (MRQEATCSLVLTQDAQHRKNQPPLAEEDDDRDHTDDAMPPP) are disordered. Residues 68–222 (NFAMVDHGVY…LKHLPASFSC (155 aa)) form the Tyrosine-protein phosphatase domain. The interval 124–136 (FGIDGSKEPFVNI) is WPD loop important for active site topology. The 1D-myo-inositol hexakisphosphate site is built by Asn135, Ile136, and Arg140. Cys160 (phosphocysteine intermediate) is an active-site residue.

The protein belongs to the protein-tyrosine phosphatase family. Atypical dual-specificity phosphatase Siw14-like subfamily.

It is found in the nucleus. The protein resides in the cytoplasm. It catalyses the reaction 5-diphospho-1D-myo-inositol 1,2,3,4,6-pentakisphosphate + H2O = 1D-myo-inositol hexakisphosphate + phosphate + H(+). The catalysed reaction is 1,5-bis(diphospho)-1D-myo-inositol 2,3,4,6-tetrakisphosphate + H2O = 1-diphospho-1D-myo-inositol 2,3,4,5,6-pentakisphosphate + phosphate + 2 H(+). It carries out the reaction 3,5-bis(diphospho)-1D-myo-inositol 1,2,4,6-tetrakisphosphate + H2O = 3-diphospho-1D-myo-inositol 1,2,4,5,6-pentakisphosphate + phosphate + 2 H(+). The enzyme catalyses 6-diphospho-1D-myo-inositol pentakisphosphate + H2O = 1D-myo-inositol hexakisphosphate + phosphate + H(+). Cleaves the beta-phosphate at the 5-position of soluble inositol pyrophosphates. Has highest activity on 5-diphosphoinositol 1,2,3,4,6-pentakisphosphate (5-InsP(7)). Possesses phosphotyrosine phosphatase activity in vitro. May contribute to regulation of drought stress responses. This Oryza sativa subsp. japonica (Rice) protein is Inositol diphosphatase DSP1.